The primary structure comprises 521 residues: Pentatricopeptide repeat-containing protein At4g26680, mitochondrial (521 aa).

A mitochondrion-targeting transit peptide spans 1–38 (MIRISIGVNRRLRYQFSSFAGYSGSENPRLFKTLGAAN). PPR repeat units lie at residues 167–201 (TPRVFDSLFKTFAHLKKFRNATDTFMQMKDYGFLP), 202–236 (TVESCNAYMSSLLGQGRVDIALRFYREMRRCKISP), 237–271 (NPYTLNMVMSGYCRSGKLDKGIELLQDMERLGFRA), 272–306 (TDVSYNTLIAGHCEKGLLSSALKLKNMMGKSGLQP), 307–341 (NVVTFNTLIHGFCRAMKLQEASKVFGEMKAVNVAP), 342–376 (NTVTYNTLINGYSQQGDHEMAFRFYEDMVCNGIQR), 377–411 (DILTYNALIFGLCKQAKTRKAAQFVKELDKENLVP), 412–446 (NSSTFSALIMGQCVRKNADRGFELYKSMIRSGCHP), 447–481 (NEQTFNMLVSAFCRNEDFDGASQVLREMVRRSIPL), and 482–516 (DSRTVHQVCNGLKHQGKDQLVKKLLQEMEGKKFLQ).

Belongs to the PPR family. P subfamily.

The protein resides in the mitochondrion. This is Pentatricopeptide repeat-containing protein At4g26680, mitochondrial from Arabidopsis thaliana (Mouse-ear cress).